Here is a 363-residue protein sequence, read N- to C-terminus: 3-dehydroquinate synthase (363 aa).

Residues 134-135 (TT), Lys-147, and Lys-156 contribute to the NAD(+) site. 3 residues coordinate Zn(2+): Glu-189, His-254, and His-271.

It belongs to the sugar phosphate cyclases superfamily. Dehydroquinate synthase family. Co(2+) serves as cofactor. It depends on Zn(2+) as a cofactor. Requires NAD(+) as cofactor.

The protein localises to the cytoplasm. The catalysed reaction is 7-phospho-2-dehydro-3-deoxy-D-arabino-heptonate = 3-dehydroquinate + phosphate. Its pathway is metabolic intermediate biosynthesis; chorismate biosynthesis; chorismate from D-erythrose 4-phosphate and phosphoenolpyruvate: step 2/7. In terms of biological role, catalyzes the conversion of 3-deoxy-D-arabino-heptulosonate 7-phosphate (DAHP) to dehydroquinate (DHQ). In Prochlorococcus marinus (strain MIT 9215), this protein is 3-dehydroquinate synthase.